A 269-amino-acid chain; its full sequence is uncharacterized protein (269 aa).

Over residues 181-191 (QKKELSPHEIA) the composition is skewed to basic and acidic residues. Positions 181–203 (QKKELSPHEIAESPSSHSTSPMG) are disordered. The span at 193 to 202 (SPSSHSTSPM) shows a compositional bias: polar residues. S200 bears the Phosphoserine mark.

This is an uncharacterized protein from Schizosaccharomyces pombe (strain 972 / ATCC 24843) (Fission yeast).